Consider the following 131-residue polypeptide: Large-conductance mechanosensitive channel (131 aa).

The next 2 membrane-spanning stretches (helical) occupy residues 14-34 (VIDLAVGVIIGGAFGKIVTSL) and 67-87 (GSFIQTVIDFLIISFSIFIFI).

It belongs to the MscL family. Homopentamer.

It localises to the cell membrane. Functionally, channel that opens in response to stretch forces in the membrane lipid bilayer. May participate in the regulation of osmotic pressure changes within the cell. In Bacillus pumilus (strain SAFR-032), this protein is Large-conductance mechanosensitive channel.